The sequence spans 210 residues: 2-hydroxy-3-keto-5-methylthiopentenyl-1-phosphate phosphatase (210 aa).

Belongs to the HAD-like hydrolase superfamily. MtnX family.

The catalysed reaction is 2-hydroxy-5-methylsulfanyl-3-oxopent-1-enyl phosphate + H2O = 1,2-dihydroxy-5-(methylsulfanyl)pent-1-en-3-one + phosphate. Its pathway is amino-acid biosynthesis; L-methionine biosynthesis via salvage pathway; L-methionine from S-methyl-5-thio-alpha-D-ribose 1-phosphate: step 4/6. Its function is as follows. Dephosphorylates 2-hydroxy-3-keto-5-methylthiopentenyl-1-phosphate (HK-MTPenyl-1-P) yielding 1,2-dihydroxy-3-keto-5-methylthiopentene (DHK-MTPene). In Microcystis aeruginosa, this protein is 2-hydroxy-3-keto-5-methylthiopentenyl-1-phosphate phosphatase.